The sequence spans 973 residues: Isoleucine--tRNA ligase, mitochondrial (973 aa).

Positions P87–H97 match the 'HIGH' region motif. Residues K625–S629 carry the 'KMSKS' region motif. K628 provides a ligand contact to ATP.

The protein belongs to the class-I aminoacyl-tRNA synthetase family.

The protein resides in the cytoplasm. The protein localises to the mitochondrion matrix. It carries out the reaction tRNA(Ile) + L-isoleucine + ATP = L-isoleucyl-tRNA(Ile) + AMP + diphosphate. In Schizosaccharomyces pombe (strain 972 / ATCC 24843) (Fission yeast), this protein is Isoleucine--tRNA ligase, mitochondrial (ism1).